The primary structure comprises 366 residues: tRNA/tmRNA (uracil-C(5))-methyltransferase (366 aa).

S-adenosyl-L-methionine-binding residues include Gln-190, Tyr-218, Asn-223, Glu-239, and Asp-299. Catalysis depends on Cys-324, which acts as the Nucleophile. Residue Glu-358 is the Proton acceptor of the active site.

This sequence belongs to the class I-like SAM-binding methyltransferase superfamily. RNA M5U methyltransferase family. TrmA subfamily.

The enzyme catalyses uridine(54) in tRNA + S-adenosyl-L-methionine = 5-methyluridine(54) in tRNA + S-adenosyl-L-homocysteine + H(+). It catalyses the reaction uridine(341) in tmRNA + S-adenosyl-L-methionine = 5-methyluridine(341) in tmRNA + S-adenosyl-L-homocysteine + H(+). Functionally, dual-specificity methyltransferase that catalyzes the formation of 5-methyluridine at position 54 (m5U54) in all tRNAs, and that of position 341 (m5U341) in tmRNA (transfer-mRNA). This Klebsiella pneumoniae (strain 342) protein is tRNA/tmRNA (uracil-C(5))-methyltransferase.